The chain runs to 467 residues: Glutamate--tRNA ligase (467 aa).

The 'HIGH' region motif lies at proline 9–glycine 19. The 'KMSKS' region signature appears at lysine 237–arginine 241. Lysine 240 provides a ligand contact to ATP.

This sequence belongs to the class-I aminoacyl-tRNA synthetase family. Glutamate--tRNA ligase type 1 subfamily. As to quaternary structure, monomer.

It localises to the cytoplasm. The enzyme catalyses tRNA(Glu) + L-glutamate + ATP = L-glutamyl-tRNA(Glu) + AMP + diphosphate. Catalyzes the attachment of glutamate to tRNA(Glu) in a two-step reaction: glutamate is first activated by ATP to form Glu-AMP and then transferred to the acceptor end of tRNA(Glu). The polypeptide is Glutamate--tRNA ligase (Xanthomonas oryzae pv. oryzae (strain MAFF 311018)).